The following is a 130-amino-acid chain: Small ribosomal subunit protein uS9 (130 aa).

It belongs to the universal ribosomal protein uS9 family.

The polypeptide is Small ribosomal subunit protein uS9 (Bacillus velezensis (strain DSM 23117 / BGSC 10A6 / LMG 26770 / FZB42) (Bacillus amyloliquefaciens subsp. plantarum)).